A 464-amino-acid chain; its full sequence is MLNAKRIHFIGIAGTGMSALAYICVERGYEVSGSDIQENISTIRLKSKGVKIYKGHNPENVNNVDLVVISSAIPPDNEEYVYAKERNIPILHRSDLLADLTKEKKSIIVGGAHGKTTTTSMIALVLENNKIDPTILVGGELEDIGGNAKLGNGEYLVAEGDESDGSILKLDPYILVITNIDNDHLDYYKSLEKIKDTFLKVIEKVPKGGFAVLNLDCENVRDIIRKIKNKEYYTYGFSNADFKADNIVLNLSGSEFDVYFRNEKLGRVKLRVPGKHNILNSLSAIAVSKILGLDFETTTKALERFQGVQRRIQLKGIIEDDILVFDDYGHHPTEIKATLETLRLYNRRLVVVFQPHRYTRTYFLSKEIAEALSLGDVIILTEIYSAGEKPIPGVSSKNIYDEIREKYPNLEVYLVDNIIEAASKAKSILKKGDLLLTLGAGNVWKVGEALLARGRKDANLEYSQ.

111-117 (GAHGKTT) contacts ATP.

It belongs to the MurCDEF family.

The protein localises to the cytoplasm. The catalysed reaction is UDP-N-acetyl-alpha-D-muramate + L-alanine + ATP = UDP-N-acetyl-alpha-D-muramoyl-L-alanine + ADP + phosphate + H(+). The protein operates within cell wall biogenesis; peptidoglycan biosynthesis. Functionally, cell wall formation. The protein is UDP-N-acetylmuramate--L-alanine ligase of Dictyoglomus turgidum (strain DSM 6724 / Z-1310).